A 1226-amino-acid polypeptide reads, in one-letter code: Chitin synthase IV (1226 aa).

Residues 1–205 form a disordered region; the sequence is MSLPERPGGS…SRKNPATAEQ (205 aa). A compositionally biased stretch (polar residues) spans 49–65; the sequence is SVSSYAETISNPHANTE. Residues 66–75 show a composition bias toward low complexity; sequence TLPLSPTHPT. Over residues 94–107 the composition is skewed to basic and acidic residues; it reads IRPERNRIDKDHRN. Over residues 134–151 the composition is skewed to polar residues; the sequence is DVSTEPSGGSQTHGSFAD. Residues 163–172 show a composition bias toward basic and acidic residues; it reads MSGDDQEKGN. The span at 173 to 198 shows a compositional bias: basic residues; that stretch reads TRVKSRPRRSKSGKITKETRHRKSRK. A helical membrane pass occupies residues 246-266; sequence MGLISIILVIMAIVGFLTFGF. Residues Asn-381, Asn-421, and Asn-443 are each glycosylated (N-linked (GlcNAc...) asparagine). Residues 516 to 536 traverse the membrane as a helical segment; that stretch reads ILILSVVGTRFVLALIFQWFI. The segment at 572–671 is disordered; the sequence is LPGDVGSSAM…PGPAGFIHDS (100 aa). Polar residues-rich tracts occupy residues 580-601 and 618-643; these read AMGSSDRTSKRGSSFLPTTSRF and TTMSSQGPASALLNPNSIYRQGNDSR. Residue Asn-640 is glycosylated (N-linked (GlcNAc...) asparagine). The segment covering 649 to 666 has biased composition (low complexity); it reads PDPYSSAASPSDGPGPAG. Residues Asn-787 and Asn-1035 are each glycosylated (N-linked (GlcNAc...) asparagine). 3 helical membrane passes run 1060–1080, 1094–1114, and 1118–1138; these read FVVFVELVGTLVLPAAIAFTF, IIPLVLLALILGLPGLLILVT, and WSYVVWMLIYLVSLPIWNFVL.

It belongs to the chitin synthase family. Class IV subfamily. As to expression, highly expressed in conidia.

The protein localises to the cell membrane. The catalysed reaction is [(1-&gt;4)-N-acetyl-beta-D-glucosaminyl](n) + UDP-N-acetyl-alpha-D-glucosamine = [(1-&gt;4)-N-acetyl-beta-D-glucosaminyl](n+1) + UDP + H(+). In terms of biological role, polymerizes chitin, a structural polymer of the cell wall and septum, by transferring the sugar moiety of UDP-GlcNAc to the non-reducing end of the growing chitin polymer. Contributes to the production of conidia and the ability of fungal conidia to germinate. Involved in fungal stress tolerances. The polypeptide is Chitin synthase IV (Metarhizium acridum (strain CQMa 102)).